Consider the following 379-residue polypeptide: Cytochrome b (379 aa).

4 helical membrane passes run 33–53, 77–98, 113–133, and 178–198; these read FGSL…FLAM, WLIR…FIHV, WNIG…GYVL, and FFAF…VHLL. Positions 83 and 97 each coordinate heme b. Histidine 182 and histidine 196 together coordinate heme b. An a ubiquinone-binding site is contributed by histidine 201. Helical transmembrane passes span 226–246, 288–308, 320–340, and 347–367; these read IKDL…ALFF, LGGV…PLLN, VTQT…WIGG, and FTMI…ILIP.

Belongs to the cytochrome b family. As to quaternary structure, the cytochrome bc1 complex contains 11 subunits: 3 respiratory subunits (MT-CYB, CYC1 and UQCRFS1), 2 core proteins (UQCRC1 and UQCRC2) and 6 low-molecular weight proteins (UQCRH/QCR6, UQCRB/QCR7, UQCRQ/QCR8, UQCR10/QCR9, UQCR11/QCR10 and a cleavage product of UQCRFS1). This cytochrome bc1 complex then forms a dimer. The cofactor is heme b.

The protein resides in the mitochondrion inner membrane. Functionally, component of the ubiquinol-cytochrome c reductase complex (complex III or cytochrome b-c1 complex) that is part of the mitochondrial respiratory chain. The b-c1 complex mediates electron transfer from ubiquinol to cytochrome c. Contributes to the generation of a proton gradient across the mitochondrial membrane that is then used for ATP synthesis. This chain is Cytochrome b (MT-CYB), found in Akodon philipmyersi (Myers' grass mouse).